The primary structure comprises 421 residues: L-Ala-D/L-amino acid epimerase (421 aa).

Substrate contacts are provided by residues T193 and 218-220 (KLK). Mg(2+) is bound by residues D247, E275, and D304. Residues K328 and 380–382 (DLD) each bind substrate.

Belongs to the mandelate racemase/muconate lactonizing enzyme family. It depends on Mg(2+) as a cofactor.

In terms of biological role, catalyzes the epimerization of various hydrophobic and polar dipeptides. Has epimerase activity with L-Ala-L-Ala, L-Ala-L-Ser, L-Ala-L-Thr and L-Ala-L-Trp (in vitro). This Populus trichocarpa (Western balsam poplar) protein is L-Ala-D/L-amino acid epimerase.